A 352-amino-acid chain; its full sequence is C-C chemokine receptor type 5 (352 aa).

At methionine 1 to alanine 30 the chain is on the extracellular side. Position 3 is a sulfotyrosine (tyrosine 3). O-linked (GalNAc...) serine glycans are attached at residues serine 6 and serine 7. Tyrosine 10, tyrosine 14, and tyrosine 15 each carry sulfotyrosine. 2 cysteine pairs are disulfide-bonded: cysteine 20–cysteine 269 and cysteine 101–cysteine 178. Residues arginine 31–cysteine 58 traverse the membrane as a helical segment. The Cytoplasmic portion of the chain corresponds to lysine 59–tyrosine 68. Residues leucine 69 to tyrosine 89 form a helical membrane-spanning segment. The Extracellular portion of the chain corresponds to alanine 90–glutamine 102. Residues leucine 103–isoleucine 124 form a helical membrane-spanning segment. The Cytoplasmic portion of the chain corresponds to aspartate 125–threonine 141. The chain crosses the membrane as a helical span at residues valine 142–phenylalanine 166. Topologically, residues threonine 167–isoleucine 198 are extracellular. The helical transmembrane segment at valine 199 to leucine 218 threads the bilayer. Over lysine 219–arginine 235 the chain is Cytoplasmic. A helical transmembrane segment spans residues leucine 236–phenylalanine 260. The Extracellular segment spans residues glutamine 261–glutamine 277. Residues alanine 278–glycine 301 form a helical membrane-spanning segment. Topologically, residues glutamate 302 to leucine 352 are cytoplasmic. Residues cysteine 321, cysteine 323, and cysteine 324 are each lipidated (S-palmitoyl cysteine). Phosphoserine; by BARK1 occurs at positions 336, 337, 342, and 349.

This sequence belongs to the G-protein coupled receptor 1 family. Interacts with PRAF2. Efficient ligand binding to CCL3/MIP-1alpha and CCL4/MIP-1beta requires sulfation, O-glycosylation and sialic acid modifications. Glycosylation on Ser-6 is required for efficient binding of CCL4. Interacts with GRK2. Interacts with ARRB1 and ARRB2. Interacts with CNIH4. Interacts with S100A4; this interaction stimulates T-lymphocyte chemotaxis. Sulfated on at least 2 of the N-terminal tyrosines. Sulfation is required for efficient binding of the chemokines, CCL3 and CCL4. Post-translationally, palmitoylation in the C-terminal is important for cell surface expression. In terms of processing, phosphorylation on serine residues in the C-terminal is stimulated by binding CC chemokines especially by APO-RANTES. O-glycosylated, but not N-glycosylated. Ser-6 appears to be the major site even if Ser-7 may be also O-glycosylated. Also sialylated glycans present which contribute to chemokine binding. Thr-16 and Ser-17 may also be glycosylated and, if so, with small moieties such as a T-antigen.

Its subcellular location is the cell membrane. Its function is as follows. Receptor for a number of inflammatory CC-chemokines including CCL3/MIP-1-alpha, CCL4/MIP-1-beta and RANTES and subsequently transduces a signal by increasing the intracellular calcium ion level. May play a role in the control of granulocytic lineage proliferation or differentiation. Participates in T-lymphocyte migration to the infection site by acting as a chemotactic receptor. The polypeptide is C-C chemokine receptor type 5 (CCR5) (Rhinopithecus bieti (Black snub-nosed monkey)).